We begin with the raw amino-acid sequence, 310 residues long: Zinc finger protein unc-98 (310 aa).

The segment covering 73-84 (GSSSAQTPTKSS) has biased composition (polar residues). Positions 73-102 (GSSSAQTPTKSSGGALDGSDQQEVRQDGTS) are disordered. 2 consecutive C2H2-type zinc fingers follow at residues 113–135 (YKCR…ERIH) and 141–163 (YVCG…AAQH). The segment at 169–188 (YKCECGRTFFSYTEMLYHKH) adopts a C2H2-type 3; degenerate zinc-finger fold. An interaction with myo-3 region spans residues 198-310 (APETTTIKVS…RTSGYVTPRF (113 aa)). Residues 246–268 (YICEYCSKSYSDSRGLAYHMYSH) form a C2H2-type 4 zinc finger.

As to quaternary structure, interacts with hum-6, mep-1, myo-3, unc-96 and unc-97/PINCH. As to expression, expressed in embryos from 1.5- to 2-fold stage in myofibrils. In larvae and adults, it is expressed in body wall muscle, and in addition, anal depressor muscle and vulval muscles. More specifically it is found in the thick filaments of muscle fibers.

Its subcellular location is the nucleus. It localises to the cytoplasm. In terms of biological role, probable transcription factor required for muscle structure. Its dual subcellular localization suggests that it may function both as a muscle adhesion complex protein and as a transcription factor, or work together with transcription factors, to influence gene expression. Thought to act as a molecular bridge between unc-97 and myo-3 at the M-line of muscles, possibly in a signaling role. Plays a role in the formation of muscle connections, also called muscle arm extensions, between the body wall and the motor axons in the dorsal and ventral cord. This chain is Zinc finger protein unc-98 (unc-98), found in Caenorhabditis elegans.